A 488-amino-acid chain; its full sequence is Multidrug resistance outer membrane protein MdtP (488 aa).

The signal sequence occupies residues 1-23 (MINRQLSRLLLCSILGSTTLISG). Residue C24 is the site of N-palmitoyl cysteine attachment. Residue C24 is the site of S-diacylglycerol cysteine attachment.

The protein belongs to the outer membrane factor (OMF) (TC 1.B.17) family. As to quaternary structure, could be part of a tripartite efflux system composed of MdtN, MdtO and MdtP.

The protein localises to the cell outer membrane. Functionally, could be involved in resistance to puromycin, acriflavine and tetraphenylarsonium chloride. This is Multidrug resistance outer membrane protein MdtP (mdtP) from Escherichia coli (strain K12).